Consider the following 566-residue polypeptide: Cyclin-dependent kinase-like 2 (566 aa).

Residues tyrosine 4 to phenylalanine 287 enclose the Protein kinase domain. Residues valine 10 to valine 18 and lysine 33 contribute to the ATP site. The short motif at lysine 45–glutamate 51 is the [NKR]KIAxRE element. The active-site Proton acceptor is the aspartate 126. Disordered stretches follow at residues aspartate 307–arginine 334 and glutamine 545–histidine 566. A compositionally biased stretch (basic and acidic residues) spans arginine 320–arginine 334.

This sequence belongs to the protein kinase superfamily. CMGC Ser/Thr protein kinase family. CDC2/CDKX subfamily.

Its subcellular location is the cytoplasm. The protein resides in the nucleus. The catalysed reaction is L-seryl-[protein] + ATP = O-phospho-L-seryl-[protein] + ADP + H(+). It catalyses the reaction L-threonyl-[protein] + ATP = O-phospho-L-threonyl-[protein] + ADP + H(+). In Oryctolagus cuniculus (Rabbit), this protein is Cyclin-dependent kinase-like 2.